Consider the following 710-residue polypeptide: DNA ligase (710 aa).

The disordered stretch occupies residues Met1–Arg26. Residues Asp53–Asp57, Ser102–Leu103, and Glu132 each bind NAD(+). Lys134 acts as the N6-AMP-lysine intermediate in catalysis. The NAD(+) site is built by Arg155, Glu196, Lys312, and Lys336. Zn(2+) is bound by residues Cys430, Cys433, Cys449, and Cys455. Residues Glu619 to Val708 enclose the BRCT domain.

It belongs to the NAD-dependent DNA ligase family. LigA subfamily. Mg(2+) is required as a cofactor. It depends on Mn(2+) as a cofactor.

The catalysed reaction is NAD(+) + (deoxyribonucleotide)n-3'-hydroxyl + 5'-phospho-(deoxyribonucleotide)m = (deoxyribonucleotide)n+m + AMP + beta-nicotinamide D-nucleotide.. Functionally, DNA ligase that catalyzes the formation of phosphodiester linkages between 5'-phosphoryl and 3'-hydroxyl groups in double-stranded DNA using NAD as a coenzyme and as the energy source for the reaction. It is essential for DNA replication and repair of damaged DNA. The chain is DNA ligase from Salinispora arenicola (strain CNS-205).